Reading from the N-terminus, the 471-residue chain is Putative metabolite transport protein YncC (471 aa).

12 consecutive transmembrane segments (helical) span residues 13–33, 50–70, 88–108, 111–131, 146–166, 175–195, 256–276, 295–315, 323–343, 358–378, 393–413, and 416–436; these read LIMI…GVIN, VTEG…ALLC, FLFF…IMAV, FLLG…LAEM, LMIV…GVTM, YMLV…LKVP, LLWI…NSIM, IANI…IWLV, ILLI…IFSI, LTVL…WLVI, ISVF…PILL, and VGLS…IGFV.

Belongs to the major facilitator superfamily. Sugar transporter (TC 2.A.1.1) family.

It localises to the cell membrane. This Bacillus subtilis (strain 168) protein is Putative metabolite transport protein YncC (yncC).